We begin with the raw amino-acid sequence, 121 residues long: Basic phospholipase A2 homolog (121 aa).

7 disulfide bridges follow: Cys26/Cys115, Cys28/Cys44, Cys43/Cys95, Cys49/Cys121, Cys50/Cys88, Cys57/Cys81, and Cys75/Cys86.

This sequence belongs to the phospholipase A2 family. Group II subfamily. K49 sub-subfamily. Homodimer. In terms of tissue distribution, expressed by the venom gland.

The protein resides in the secreted. Functionally, snake venom phospholipase A2 homolog that lacks enzymatic activity, but has myotoxic and cytolytic activities. This is Basic phospholipase A2 homolog from Metlapilcoatlus nummifer (Mexican jumping pitviper).